The sequence spans 360 residues: UDP-N-acetylglucosamine--N-acetylmuramyl-(pentapeptide) pyrophosphoryl-undecaprenol N-acetylglucosamine transferase (360 aa).

UDP-N-acetyl-alpha-D-glucosamine-binding positions include 15 to 17 (TGG), N124, R165, S191, and Q285.

The protein belongs to the glycosyltransferase 28 family. MurG subfamily.

The protein resides in the cell inner membrane. It catalyses the reaction di-trans,octa-cis-undecaprenyl diphospho-N-acetyl-alpha-D-muramoyl-L-alanyl-D-glutamyl-meso-2,6-diaminopimeloyl-D-alanyl-D-alanine + UDP-N-acetyl-alpha-D-glucosamine = di-trans,octa-cis-undecaprenyl diphospho-[N-acetyl-alpha-D-glucosaminyl-(1-&gt;4)]-N-acetyl-alpha-D-muramoyl-L-alanyl-D-glutamyl-meso-2,6-diaminopimeloyl-D-alanyl-D-alanine + UDP + H(+). The protein operates within cell wall biogenesis; peptidoglycan biosynthesis. Functionally, cell wall formation. Catalyzes the transfer of a GlcNAc subunit on undecaprenyl-pyrophosphoryl-MurNAc-pentapeptide (lipid intermediate I) to form undecaprenyl-pyrophosphoryl-MurNAc-(pentapeptide)GlcNAc (lipid intermediate II). This chain is UDP-N-acetylglucosamine--N-acetylmuramyl-(pentapeptide) pyrophosphoryl-undecaprenol N-acetylglucosamine transferase, found in Gloeothece citriformis (strain PCC 7424) (Cyanothece sp. (strain PCC 7424)).